Reading from the N-terminus, the 308-residue chain is Ribosomal RNA large subunit methyltransferase F (308 aa).

It belongs to the methyltransferase superfamily. METTL16/RlmF family.

It localises to the cytoplasm. The catalysed reaction is adenosine(1618) in 23S rRNA + S-adenosyl-L-methionine = N(6)-methyladenosine(1618) in 23S rRNA + S-adenosyl-L-homocysteine + H(+). In terms of biological role, specifically methylates the adenine in position 1618 of 23S rRNA. The sequence is that of Ribosomal RNA large subunit methyltransferase F from Salmonella heidelberg (strain SL476).